The sequence spans 276 residues: Large ribosomal subunit protein uL2 (276 aa).

Disordered regions lie at residues 14 to 58 and 219 to 276; these read RNAS…GGGH and PITR…KNRK. Residues 16–27 are compositionally biased toward polar residues; sequence ASVSDFSELTRS. Residues 255-276 are compositionally biased toward basic residues; that stretch reads RRPKKASNKMIVRRRPSGKNRK.

This sequence belongs to the universal ribosomal protein uL2 family. As to quaternary structure, part of the 50S ribosomal subunit. Forms a bridge to the 30S subunit in the 70S ribosome.

Its function is as follows. One of the primary rRNA binding proteins. Required for association of the 30S and 50S subunits to form the 70S ribosome, for tRNA binding and peptide bond formation. It has been suggested to have peptidyltransferase activity; this is somewhat controversial. Makes several contacts with the 16S rRNA in the 70S ribosome. The chain is Large ribosomal subunit protein uL2 from Bifidobacterium longum (strain DJO10A).